A 288-amino-acid polypeptide reads, in one-letter code: Pantothenate synthetase (288 aa).

30 to 37 lines the ATP pocket; the sequence is MGALHEGH. H37 acts as the Proton donor in catalysis. Q61 contacts (R)-pantoate. Beta-alanine is bound at residue Q61. An ATP-binding site is contributed by 147-150; the sequence is GEKD. Q153 contributes to the (R)-pantoate binding site. ATP-binding positions include L176 and 184–187; that span reads ISSR.

It belongs to the pantothenate synthetase family. As to quaternary structure, homodimer.

Its subcellular location is the cytoplasm. It carries out the reaction (R)-pantoate + beta-alanine + ATP = (R)-pantothenate + AMP + diphosphate + H(+). It participates in cofactor biosynthesis; (R)-pantothenate biosynthesis; (R)-pantothenate from (R)-pantoate and beta-alanine: step 1/1. Its function is as follows. Catalyzes the condensation of pantoate with beta-alanine in an ATP-dependent reaction via a pantoyl-adenylate intermediate. The polypeptide is Pantothenate synthetase (Prosthecochloris aestuarii (strain DSM 271 / SK 413)).